A 172-amino-acid polypeptide reads, in one-letter code: 3-hydroxydecanoyl-[acyl-carrier-protein] dehydratase (172 aa).

His-71 is a catalytic residue.

It belongs to the thioester dehydratase family. FabA subfamily. In terms of assembly, homodimer.

It localises to the cytoplasm. The enzyme catalyses a (3R)-hydroxyacyl-[ACP] = a (2E)-enoyl-[ACP] + H2O. The catalysed reaction is (3R)-hydroxydecanoyl-[ACP] = (2E)-decenoyl-[ACP] + H2O. It catalyses the reaction (2E)-decenoyl-[ACP] = (3Z)-decenoyl-[ACP]. It functions in the pathway lipid metabolism; fatty acid biosynthesis. Functionally, necessary for the introduction of cis unsaturation into fatty acids. Catalyzes the dehydration of (3R)-3-hydroxydecanoyl-ACP to E-(2)-decenoyl-ACP and then its isomerization to Z-(3)-decenoyl-ACP. Can catalyze the dehydratase reaction for beta-hydroxyacyl-ACPs with saturated chain lengths up to 16:0, being most active on intermediate chain length. The sequence is that of 3-hydroxydecanoyl-[acyl-carrier-protein] dehydratase from Aliivibrio salmonicida (strain LFI1238) (Vibrio salmonicida (strain LFI1238)).